We begin with the raw amino-acid sequence, 342 residues long: D-erythrose-4-phosphate dehydrogenase (342 aa).

An NAD(+)-binding site is contributed by 12–13 (RI). Substrate contacts are provided by residues 154–156 (SCT), Arg200, 213–214 (TK), and Arg236. The active-site Nucleophile is the Cys155. Position 318 (Asn318) interacts with NAD(+).

Belongs to the glyceraldehyde-3-phosphate dehydrogenase family. Epd subfamily. As to quaternary structure, homotetramer.

It is found in the cytoplasm. The catalysed reaction is D-erythrose 4-phosphate + NAD(+) + H2O = 4-phospho-D-erythronate + NADH + 2 H(+). The protein operates within cofactor biosynthesis; pyridoxine 5'-phosphate biosynthesis; pyridoxine 5'-phosphate from D-erythrose 4-phosphate: step 1/5. Catalyzes the NAD-dependent conversion of D-erythrose 4-phosphate to 4-phosphoerythronate. The polypeptide is D-erythrose-4-phosphate dehydrogenase (Klebsiella pneumoniae (strain 342)).